The primary structure comprises 237 residues: Ribosomal RNA large subunit methyltransferase E (237 aa).

Residues Gly-76, Trp-78, Asp-99, Asp-115, and Asp-139 each coordinate S-adenosyl-L-methionine. The active-site Proton acceptor is the Lys-179.

This sequence belongs to the class I-like SAM-binding methyltransferase superfamily. RNA methyltransferase RlmE family.

The protein resides in the cytoplasm. The catalysed reaction is uridine(2552) in 23S rRNA + S-adenosyl-L-methionine = 2'-O-methyluridine(2552) in 23S rRNA + S-adenosyl-L-homocysteine + H(+). Its function is as follows. Specifically methylates the uridine in position 2552 of 23S rRNA at the 2'-O position of the ribose in the fully assembled 50S ribosomal subunit. In Rhodopseudomonas palustris (strain TIE-1), this protein is Ribosomal RNA large subunit methyltransferase E.